Reading from the N-terminus, the 459-residue chain is Ribulose bisphosphate carboxylase/oxygenase activase, chloroplastic (459 aa).

164–171 lines the ATP pocket; that stretch reads GGKGQGKS.

The protein belongs to the RuBisCO activase family.

It localises to the plastid. The protein resides in the chloroplast stroma. Its function is as follows. Activation of RuBisCO (ribulose-1,5-bisphosphate carboxylase/oxygenase; EC 4.1.1.39) involves the ATP-dependent carboxylation of the epsilon-amino group of lysine leading to a carbamate structure. This is Ribulose bisphosphate carboxylase/oxygenase activase, chloroplastic from Solanum pennellii (Tomato).